A 157-amino-acid polypeptide reads, in one-letter code: Cyclic pyranopterin monophosphate synthase (157 aa).

Residues 73-75 and 110-111 each bind substrate; these read LCH and ME. Residue Asp-125 is part of the active site.

This sequence belongs to the MoaC family. As to quaternary structure, homohexamer; trimer of dimers.

It catalyses the reaction (8S)-3',8-cyclo-7,8-dihydroguanosine 5'-triphosphate = cyclic pyranopterin phosphate + diphosphate. It participates in cofactor biosynthesis; molybdopterin biosynthesis. In terms of biological role, catalyzes the conversion of (8S)-3',8-cyclo-7,8-dihydroguanosine 5'-triphosphate to cyclic pyranopterin monophosphate (cPMP). The chain is Cyclic pyranopterin monophosphate synthase from Pseudomonas fluorescens (strain SBW25).